The primary structure comprises 64 residues: Large ribosomal subunit protein bL35 (64 aa).

The segment covering 1-26 (MPKMKSHRGASKRFKRTASGKLKRSH) has biased composition (basic residues). The interval 1–42 (MPKMKSHRGASKRFKRTASGKLKRSHAYTSHLFANKSTKAKR) is disordered.

This sequence belongs to the bacterial ribosomal protein bL35 family.

The protein is Large ribosomal subunit protein bL35 of Exiguobacterium sp. (strain ATCC BAA-1283 / AT1b).